Consider the following 208-residue polypeptide: Imidazole glycerol phosphate synthase subunit HisH (208 aa).

The region spanning 1–206 (MIVIIDYDTG…KEVIRSCKSS (206 aa)) is the Glutamine amidotransferase type-1 domain. The active-site Nucleophile is cysteine 79. Active-site residues include histidine 181 and glutamate 183.

As to quaternary structure, heterodimer of HisH and HisF.

It localises to the cytoplasm. The enzyme catalyses 5-[(5-phospho-1-deoxy-D-ribulos-1-ylimino)methylamino]-1-(5-phospho-beta-D-ribosyl)imidazole-4-carboxamide + L-glutamine = D-erythro-1-(imidazol-4-yl)glycerol 3-phosphate + 5-amino-1-(5-phospho-beta-D-ribosyl)imidazole-4-carboxamide + L-glutamate + H(+). The catalysed reaction is L-glutamine + H2O = L-glutamate + NH4(+). The protein operates within amino-acid biosynthesis; L-histidine biosynthesis; L-histidine from 5-phospho-alpha-D-ribose 1-diphosphate: step 5/9. Its function is as follows. IGPS catalyzes the conversion of PRFAR and glutamine to IGP, AICAR and glutamate. The HisH subunit catalyzes the hydrolysis of glutamine to glutamate and ammonia as part of the synthesis of IGP and AICAR. The resulting ammonia molecule is channeled to the active site of HisF. This chain is Imidazole glycerol phosphate synthase subunit HisH, found in Listeria monocytogenes serotype 4b (strain CLIP80459).